A 227-amino-acid polypeptide reads, in one-letter code: MTAIAPVITIDGPSGAGKGTLCKAMAEALQWHLLDSGAIYRVLALAALHHHVGLASEDALVPLASHLDVRFVSTDGNLEVILEGEDVSGEIRTQEVANAASQVAAFPRVREALLRRQRAFREAPGLIADGRDMGTVVFPDAPVKIFLDASSEERANRRMLQLQEKGFSVNFERLLAEIKERDDRDRNRAVAPLVPAADALVLDSTRLSIEQVIEKALQYARQKLALA.

Position 12–20 (12–20 (GPSGAGKGT)) interacts with ATP.

This sequence belongs to the cytidylate kinase family. Type 1 subfamily.

It is found in the cytoplasm. The catalysed reaction is CMP + ATP = CDP + ADP. It catalyses the reaction dCMP + ATP = dCDP + ADP. This is Cytidylate kinase from Salmonella arizonae (strain ATCC BAA-731 / CDC346-86 / RSK2980).